A 72-amino-acid chain; its full sequence is DNA-directed RNA polymerase subunit omega (72 aa).

It belongs to the RNA polymerase subunit omega family. The RNAP catalytic core consists of 2 alpha, 1 beta, 1 beta' and 1 omega subunit. When a sigma factor is associated with the core the holoenzyme is formed, which can initiate transcription.

The catalysed reaction is RNA(n) + a ribonucleoside 5'-triphosphate = RNA(n+1) + diphosphate. Promotes RNA polymerase assembly. Latches the N- and C-terminal regions of the beta' subunit thereby facilitating its interaction with the beta and alpha subunits. In Staphylococcus aureus (strain Mu3 / ATCC 700698), this protein is DNA-directed RNA polymerase subunit omega.